A 498-amino-acid chain; its full sequence is Polygalacturonan/rhamnogalacturonan-binding protein YtcQ (498 aa).

Positions 1 to 22 are cleaved as a signal peptide; that stretch reads MGNKWRVLLIVLVLALGGVLAG. Residue Cys23 is the site of N-palmitoyl cysteine attachment. Cys23 is lipidated: S-diacylglycerol cysteine.

This sequence belongs to the bacterial solute-binding protein 1 family. In terms of assembly, the complex is probably composed of two ATP-binding proteins (MsmX), two transmembrane proteins (YtcP and YteP) and a solute-binding protein (YtcQ).

Its subcellular location is the cell membrane. Involved in pectin degradation. Part of the ABC transporter complex YtcQP-YteP involved in the uptake of polygalacturonan and rhamnogalacturonan type I. This chain is Polygalacturonan/rhamnogalacturonan-binding protein YtcQ (ytcQ), found in Bacillus subtilis (strain 168).